The sequence spans 513 residues: Probable G-protein coupled receptor Mth-like 9 (513 aa).

Residues Met1–Ser19 form the signal peptide. Over Val20–Arg207 the chain is Extracellular. 4 cysteine pairs are disulfide-bonded: Cys29/Cys82, Cys84/Cys89, Cys93/Cys181, and Cys94/Cys107. N-linked (GlcNAc...) asparagine glycosylation occurs at Asn36. 3 N-linked (GlcNAc...) asparagine glycosylation sites follow: Asn106, Asn125, and Asn165. A helical transmembrane segment spans residues Val208–Leu228. At Leu229–Gln242 the chain is on the cytoplasmic side. A helical membrane pass occupies residues Leu243 to Leu263. The Extracellular portion of the chain corresponds to Lys264–Asn276. Residues Ile277 to Leu297 traverse the membrane as a helical segment. Over Asp298–Arg314 the chain is Cytoplasmic. A helical membrane pass occupies residues Leu315–Gln335. Residues Asp336 to Gly360 lie on the Extracellular side of the membrane. A helical membrane pass occupies residues Ile361–Leu381. The Cytoplasmic portion of the chain corresponds to Lys382–Lys403. The helical transmembrane segment at Ile404 to Ile424 threads the bilayer. The Extracellular portion of the chain corresponds to Arg425–His438. Residues Phe439–Ile459 traverse the membrane as a helical segment. Over Leu460–Leu513 the chain is Cytoplasmic.

Belongs to the G-protein coupled receptor 2 family. Mth subfamily.

Its subcellular location is the cell membrane. This is Probable G-protein coupled receptor Mth-like 9 (mthl9) from Drosophila melanogaster (Fruit fly).